We begin with the raw amino-acid sequence, 83 residues long: Vitellogenesis-inhibiting hormone (83 aa).

Intrachain disulfides connect Cys15-Cys52, Cys32-Cys48, and Cys35-Cys61.

As to expression, found in the sinus glands of both male and female. Found also in the brain; the neuroendocrine structures of the protocerebrum.

It is found in the secreted. In terms of biological role, inhibits secondary vitellogenesis in females. Has no hyperglycemic or molt-inhibiting activity. The sequence is that of Vitellogenesis-inhibiting hormone from Armadillidium vulgare (Pillbug).